We begin with the raw amino-acid sequence, 323 residues long: MSKTLSLQLPWVEKYRPQVLSDIVGNKETIDRLQQIAKDGNMPHMIISGMPGIGKTTSVHCLAHELLGRSYADGVLELNASDDRGIDVVRNQIKHFAQKKLHLPPGKHKIVILDEADSMTAGAQQALRRTMELYSNSTRFAFACNQSNKIIEPLQSRCAILRYSKLSDEDVLKRLLQIIKLEDVKYTNDGLEAIIFTAEGDMRQAINNLQSTVAGHGLVNADNVFKIVDSPHPLIVKKMLLASNLEDSIQILRTDLWKKGYSSIDIVTTSFRVTKNLAQVKESVRLEMIKEIGLTHMRILEGVGTYLQLASMLAKIHKLNNKA.

ATP contacts are provided by residues Val12, Val24, 49–57, Asn145, and Arg203; that span reads GMPGIGKTT.

This sequence belongs to the activator 1 small subunits family. As to quaternary structure, replication factor C (RFC) is a heteropentamer of subunits RFC1, RFC2, RFC3, RFC4 and RFC5 and forms a complex with POL30/PCNA in the presence of ATP. Component of the RAD24-RFC complex which consists of RAD14, RFC2, RFC3, RFC4 and RFC5 and associates with the checkpoint clamp DDC1:MEC3:RAD17 complex. Component of the ELG1-RFC complex which consists of ELG1, RFC2, RFC3, RFC4 and RFC5. Component of the CTF18-RFC complex, which consists of CTF18, CTF8, DCC1, RFC2, RFC3, RFC4 and RFC5. RFC4 interacts with ECO1.

The protein localises to the nucleus. Functionally, component of ATP-dependent clamp loader (RFC and RFC-like) complexes for DNA clamps, such as the POL30/PCNA homotrimer and the checkpoint clamp DDC1:MEC3:RAD17 complex. During a clamp loading circle, the RFC:clamp complex binds to DNA and the recognition of the double-stranded/single-stranded junction stimulates ATP hydrolysis by RFC. The complex presumably provides bipartite ATP sites in which one subunit supplies a catalytic site for hydrolysis of ATP bound to the neighboring subunit. Dissociation of RFC from the clamp leaves the clamp encircling DNA. Component of the replication factor C (RFC or activator 1) complex which loads POL30/PCNA and acts during elongation of primed DNA templates by DNA polymerase delta and epsilon. RFC has an essential but redundant activity in sister chromatid cohesion establishment. Component of the RFC-like complex CTF18-RFC which is required for efficient establishment of chromosome cohesion during S-phase and may load or unload POL30/PCNA. Component of the RFC-like RAD24-RFC complex which loads the checkpoint clamp DDC1:MEC3:RAD17 complex and is involved in DNA repair pathways. Component of the RFC-like ELG1-RFC complex which appears to have a role in DNA replication, replication fork re-start, recombination and repair. The chain is Replication factor C subunit 4 (RFC4) from Saccharomyces cerevisiae (strain ATCC 204508 / S288c) (Baker's yeast).